A 342-amino-acid polypeptide reads, in one-letter code: Phosphate acyltransferase (342 aa).

This sequence belongs to the PlsX family. Homodimer. Probably interacts with PlsY.

The protein resides in the cytoplasm. It catalyses the reaction a fatty acyl-[ACP] + phosphate = an acyl phosphate + holo-[ACP]. It functions in the pathway lipid metabolism; phospholipid metabolism. In terms of biological role, catalyzes the reversible formation of acyl-phosphate (acyl-PO(4)) from acyl-[acyl-carrier-protein] (acyl-ACP). This enzyme utilizes acyl-ACP as fatty acyl donor, but not acyl-CoA. The polypeptide is Phosphate acyltransferase (Shewanella amazonensis (strain ATCC BAA-1098 / SB2B)).